Reading from the N-terminus, the 260-residue chain is Snake venom serine protease homolog KN4 (260 aa).

The first 18 residues, 1 to 18, serve as a signal peptide directing secretion; it reads MVLIRVLANLLILQLSYA. The propeptide occupies 19–24; it reads QKSSEL. One can recognise a Peptidase S1 domain in the interval 25–251; that stretch reads IIGGDECNIN…HLDWIQNIIA (227 aa). Intrachain disulfides connect C31–C165, C52–C68, C100–C258, C144–C212, C176–C191, and C202–C227. 5 N-linked (GlcNAc...) asparagine glycosylation sites follow: N83, N123, N124, N156, and N172. N-linked (GlcNAc...) asparagine glycosylation is present at N253.

Belongs to the peptidase S1 family. Snake venom subfamily. Expressed by the venom gland.

The protein localises to the secreted. Snake venom serine protease homolog that may act in the hemostasis system of the prey. The sequence is that of Snake venom serine protease homolog KN4 from Trimeresurus stejnegeri (Chinese green tree viper).